Consider the following 349-residue polypeptide: tRNA pseudouridine synthase D (349 aa).

Phe27 contacts substrate. Asp80 functions as the Nucleophile in the catalytic mechanism. Asn129 lines the substrate pocket. A TRUD domain is found at 155 to 303 (GVPNYFGAQR…VEAARRAMLL (149 aa)). Residue Phe329 coordinates substrate.

The protein belongs to the pseudouridine synthase TruD family.

The enzyme catalyses uridine(13) in tRNA = pseudouridine(13) in tRNA. Responsible for synthesis of pseudouridine from uracil-13 in transfer RNAs. The polypeptide is tRNA pseudouridine synthase D (Escherichia coli O6:H1 (strain CFT073 / ATCC 700928 / UPEC)).